A 397-amino-acid chain; its full sequence is MLNLLYLILGIICGTITGLFPGIHPNNIVALSFLILPYFGLDNYIPFLIGLVITHYFINFIPSAFLGVPDDETAVSALPMHKLTLNGNGYEAIVLAGFGSYLGVVFSILISLFLMSILHFDVRAFYCSIKIFIPFILIAFILYQIFTAKSVWEVLVIFLSGIFGIAVLYCSEAFNITLTAIFTGMFGIPLLINNLKTYKIKSQMMAFPDFELKFLKSSFFASVAGFFRIFLPGISGAQLNYILSKILNERDLKNFIVSQGSIILSNEVFSLLAVIFIGVGRSGVARAIQLLNANININTAIFSILISSTIAIIILLNLSKYILLFIRKVNFKFLSLFFIIFCSLVVIIGSYNTYLIYHIIVYLTAIYIGLLAVKSNTNLSNMMNVLIFPTILYFLRG.

10 helical membrane passes run 2 to 24 (LNLLYLILGIICGTITGLFPGIH), 44 to 66 (YIPFLIGLVITHYFINFIPSAFL), 92 to 114 (AIVLAGFGSYLGVVFSILISLFL), 124 to 143 (AFYCSIKIFIPFILIAFILY), 150 to 169 (SVWEVLVIFLSGIFGIAVLY), 173 to 195 (AFNITLTAIFTGMFGIPLLINNL), 255 to 277 (FIVSQGSIILSNEVFSLLAVIFI), 297 to 319 (INTAIFSILISSTIAIIILLNLS), 331 to 350 (FKFLSLFFIIFCSLVVIIGS), and 354 to 373 (YLIYHIIVYLTAIYIGLLAV).

The protein localises to the cell membrane. This is an uncharacterized protein from Methanocaldococcus jannaschii (strain ATCC 43067 / DSM 2661 / JAL-1 / JCM 10045 / NBRC 100440) (Methanococcus jannaschii).